The sequence spans 561 residues: Excitatory amino acid transporter 4 (561 aa).

Topologically, residues 1–52 (MSSHGNSLFLRESGAGGGCLQGLQDSLQQRALRTRLRLQTMTREHVRRFLRR) are cytoplasmic. Phosphoserine is present on serine 2. A run of 3 helical transmembrane segments spans residues 53–73 (NAFI…AFAL), 96–116 (MLQM…MASL), and 130–150 (VYYM…VTII). N-linked (GlcNAc...) asparagine glycosylation is found at asparagine 213, asparagine 229, and asparagine 236. 3 consecutive transmembrane segments (helical) span residues 259-282 (SANG…IGGM), 292-319 (FFDS…LFLI), and 341-362 (LTVI…YFLV). The segment at residues 368–398 (FPFIGGILQALITAMGTSSSSATLPITFRCL) is an intramembrane region (discontinuously helical). 385 to 387 (SSS) contacts L-aspartate. Residues 408–434 (ITRFVLPVGATVNMDGTALYEALAAIF) form a helical membrane-spanning segment. Residues glycine 416, threonine 418, and asparagine 420 each contribute to the Na(+) site. L-aspartate-binding positions include threonine 424, 465 to 469 (IPQAG), aspartate 498, and asparagine 505. An intramembrane region (discontinuously helical) is located at residues 448 to 481 (ITTISITATAASVGAAGIPQAGLVTMVIVLTSVG). Residues 495 to 516 (WFLDRLRTMTNVLGDSIGAAVI) traverse the membrane as a helical segment. Na(+) is bound by residues asparagine 505 and aspartate 509.

It belongs to the dicarboxylate/amino acid:cation symporter (DAACS) (TC 2.A.23) family. SLC1A6 subfamily. As to quaternary structure, homotrimer.

The protein localises to the cell membrane. It carries out the reaction K(+)(in) + L-glutamate(out) + 3 Na(+)(out) + H(+)(out) = K(+)(out) + L-glutamate(in) + 3 Na(+)(in) + H(+)(in). The enzyme catalyses K(+)(in) + L-aspartate(out) + 3 Na(+)(out) + H(+)(out) = K(+)(out) + L-aspartate(in) + 3 Na(+)(in) + H(+)(in). The catalysed reaction is D-aspartate(out) + K(+)(in) + 3 Na(+)(out) + H(+)(out) = D-aspartate(in) + K(+)(out) + 3 Na(+)(in) + H(+)(in). In terms of biological role, sodium-dependent, high-affinity amino acid transporter that mediates the uptake of L-glutamate and also L-aspartate and D-aspartate. Functions as a symporter that transports one amino acid molecule together with two or three Na(+) ions and one proton, in parallel with the counter-transport of one K(+) ion. Mediates Cl(-) flux that is not coupled to amino acid transport; this avoids the accumulation of negative charges due to aspartate and Na(+) symport. Plays a redundant role in the rapid removal of released glutamate from the synaptic cleft, which is essential for terminating the postsynaptic action of glutamate. The polypeptide is Excitatory amino acid transporter 4 (Slc1a6) (Rattus norvegicus (Rat)).